The chain runs to 625 residues: Thioredoxin domain-containing protein 6 (625 aa).

The NDK stretch occupies residues 158-302 (KSYTVAIIKP…FFFPNFKISN (145 aa)). A disordered region spans residues 594–625 (GETPETSASDISRNAAAQGDDPEQDESKEMEE). Residues 613-625 (DDPEQDESKEMEE) are compositionally biased toward acidic residues.

It belongs to the NDK family. As to quaternary structure, monomer and homodimer.

The protein resides in the cytoplasm. Its subcellular location is the cytoskeleton. It localises to the cilium axoneme. It is found in the dynein axonemal particle. May be a regulator of microtubule physiology. In Xenopus laevis (African clawed frog), this protein is Thioredoxin domain-containing protein 6.